A 462-amino-acid polypeptide reads, in one-letter code: L-seryl-tRNA(Sec) selenium transferase (462 aa).

N6-(pyridoxal phosphate)lysine is present on Lys293.

It belongs to the SelA family. It depends on pyridoxal 5'-phosphate as a cofactor.

The protein localises to the cytoplasm. It catalyses the reaction L-seryl-tRNA(Sec) + selenophosphate + H(+) = L-selenocysteinyl-tRNA(Sec) + phosphate. It functions in the pathway aminoacyl-tRNA biosynthesis; selenocysteinyl-tRNA(Sec) biosynthesis; selenocysteinyl-tRNA(Sec) from L-seryl-tRNA(Sec) (bacterial route): step 1/1. Its function is as follows. Converts seryl-tRNA(Sec) to selenocysteinyl-tRNA(Sec) required for selenoprotein biosynthesis. The chain is L-seryl-tRNA(Sec) selenium transferase from Clostridium botulinum (strain Okra / Type B1).